A 296-amino-acid polypeptide reads, in one-letter code: Nucleotide-binding protein SEQ_0857 (296 aa).

13 to 20 lines the ATP pocket; the sequence is GMSGAGKT. 63 to 66 provides a ligand contact to GTP; sequence DMRS.

It belongs to the RapZ-like family.

Its function is as follows. Displays ATPase and GTPase activities. The sequence is that of Nucleotide-binding protein SEQ_0857 from Streptococcus equi subsp. equi (strain 4047).